The sequence spans 170 residues: 4-hydroxyphenylacetate 3-monooxygenase reductase component (170 aa).

The protein belongs to the non-flavoprotein flavin reductase family. HpaC subfamily. Homodimer. 4-HPA 3-monooxygenase consists of a reductase component HpaC and an oxygenase component HpaB.

The catalysed reaction is a reduced flavin + NAD(+) = an oxidized flavin + NADH + 2 H(+). It participates in aromatic compound metabolism; 4-hydroxyphenylacetate degradation; pyruvate and succinate semialdehyde from 4-hydroxyphenylacetate: step 1/7. Functionally, catalyzes the reduction of free flavins (FMN, FAD and riboflavin) by NADH. Subsequently, the reduced flavins diffuse to the large HpaB component or to other electron acceptors such as cytochrome c and Fe(3+) ion. This Escherichia coli protein is 4-hydroxyphenylacetate 3-monooxygenase reductase component (hpaC).